Consider the following 310-residue polypeptide: Elongation factor Ts, mitochondrial (310 aa).

The N-terminal 42 residues, 1–42, are a transit peptide targeting the mitochondrion; that stretch reads MGFQVLRSVIQAPLAKRSFLCKSCPSGLRVLYNNILLSSRSY.

It belongs to the EF-Ts family.

It is found in the mitochondrion. In terms of biological role, associates with the EF-Tu.GDP complex and induces the exchange of GDP to GTP. It remains bound to the aminoacyl-tRNA.EF-Tu.GTP complex up to the GTP hydrolysis stage on the ribosome. This is Elongation factor Ts, mitochondrial (tsf1) from Schizosaccharomyces japonicus (strain yFS275 / FY16936) (Fission yeast).